The chain runs to 278 residues: HTH-type transcriptional regulator ExsA (278 aa).

The 99-residue stretch at 171–269 folds into the HTH araC/xylS-type domain; that stretch reads ERLQLFMEKH…GCTPSRSRQG (99 aa). 2 DNA-binding regions (H-T-H motif) span residues 188-209 and 236-259; these read SDFS…GSVY and IVDI…RRRF.

In terms of assembly, homodimer. Interacts with ExsD; this interaction inhibits ExsA activity.

With respect to regulation, in the absence of inducing signals such as low Ca(2+) or host cell contact, the T3SS/injectisome is expressed at a low basal level and exists in a quiescent state due to ExsA sequestration by ExsD in a 1:1 complex. Upon host cell contact, this interaction is disrupted by the anti-antiactivator protein ExsC leading to ExsA activation. Functionally, transcriptional regulator that plays an essential role in the activation the type III secretion system (T3SS) operons. In addition, ExsA directly regulates the transcription of ImpA virulence factor that cooperatively inhibits the functions of host macrophages together with the T3SS. The protein is HTH-type transcriptional regulator ExsA (exsA) of Pseudomonas aeruginosa (strain ATCC 15692 / DSM 22644 / CIP 104116 / JCM 14847 / LMG 12228 / 1C / PRS 101 / PAO1).